Reading from the N-terminus, the 185-residue chain is Dihydrofolate reductase 1 (185 aa).

Positions Glu8–Leu185 constitute a DHFR domain.

It belongs to the dihydrofolate reductase family.

It carries out the reaction (6S)-5,6,7,8-tetrahydrofolate + NADP(+) = 7,8-dihydrofolate + NADPH + H(+). It functions in the pathway cofactor biosynthesis; tetrahydrofolate biosynthesis; 5,6,7,8-tetrahydrofolate from 7,8-dihydrofolate: step 1/1. Functionally, key enzyme in folate metabolism. Catalyzes an essential reaction for de novo glycine and purine synthesis, and for DNA precursor synthesis. The polypeptide is Dihydrofolate reductase 1 (folA1) (Haloarcula marismortui (strain ATCC 43049 / DSM 3752 / JCM 8966 / VKM B-1809) (Halobacterium marismortui)).